The sequence spans 155 residues: Ribosomal RNA large subunit methyltransferase H (155 aa).

S-adenosyl-L-methionine-binding positions include Leu-72, Gly-103, and 122 to 127 (LSPLTL).

This sequence belongs to the RNA methyltransferase RlmH family. Homodimer.

Its subcellular location is the cytoplasm. The catalysed reaction is pseudouridine(1915) in 23S rRNA + S-adenosyl-L-methionine = N(3)-methylpseudouridine(1915) in 23S rRNA + S-adenosyl-L-homocysteine + H(+). Functionally, specifically methylates the pseudouridine at position 1915 (m3Psi1915) in 23S rRNA. This Aeromonas salmonicida (strain A449) protein is Ribosomal RNA large subunit methyltransferase H.